Here is a 243-residue protein sequence, read N- to C-terminus: Large ribosomal subunit protein uL3 (243 aa).

Disordered stretches follow at residues Val139–Gly164 and Lys218–Ala243. Position 151 is an N5-methylglutamine (Gln151). Over residues Lys218–Asp229 the composition is skewed to basic and acidic residues. Residues Lys230–Ala243 are compositionally biased toward low complexity.

The protein belongs to the universal ribosomal protein uL3 family. Part of the 50S ribosomal subunit. Forms a cluster with proteins L14 and L19. In terms of processing, methylated by PrmB.

Its function is as follows. One of the primary rRNA binding proteins, it binds directly near the 3'-end of the 23S rRNA, where it nucleates assembly of the 50S subunit. The protein is Large ribosomal subunit protein uL3 of Afipia carboxidovorans (strain ATCC 49405 / DSM 1227 / KCTC 32145 / OM5) (Oligotropha carboxidovorans).